The chain runs to 274 residues: Large ribosomal subunit protein uL2 (274 aa).

2 disordered regions span residues Ala-28–Gly-55 and Val-224–Lys-274.

This sequence belongs to the universal ribosomal protein uL2 family. In terms of assembly, part of the 50S ribosomal subunit. Forms a bridge to the 30S subunit in the 70S ribosome.

Functionally, one of the primary rRNA binding proteins. Required for association of the 30S and 50S subunits to form the 70S ribosome, for tRNA binding and peptide bond formation. It has been suggested to have peptidyltransferase activity; this is somewhat controversial. Makes several contacts with the 16S rRNA in the 70S ribosome. The chain is Large ribosomal subunit protein uL2 from Pseudomonas putida (strain ATCC 47054 / DSM 6125 / CFBP 8728 / NCIMB 11950 / KT2440).